Reading from the N-terminus, the 356-residue chain is Probable dual-specificity RNA methyltransferase RlmN (356 aa).

Glu-97 functions as the Proton acceptor in the catalytic mechanism. One can recognise a Radical SAM core domain in the interval 103–333; it reads YHHGNSVCIS…VTIRREMGSD (231 aa). The cysteines at positions 110 and 338 are disulfide-linked. [4Fe-4S] cluster is bound by residues Cys-117, Cys-121, and Cys-124. S-adenosyl-L-methionine contacts are provided by residues 164-165, Ser-196, 219-221, and Asn-295; these read GE and SLH. Cys-338 acts as the S-methylcysteine intermediate in catalysis.

It belongs to the radical SAM superfamily. RlmN family. It depends on [4Fe-4S] cluster as a cofactor.

It localises to the cytoplasm. It catalyses the reaction adenosine(2503) in 23S rRNA + 2 reduced [2Fe-2S]-[ferredoxin] + 2 S-adenosyl-L-methionine = 2-methyladenosine(2503) in 23S rRNA + 5'-deoxyadenosine + L-methionine + 2 oxidized [2Fe-2S]-[ferredoxin] + S-adenosyl-L-homocysteine. The enzyme catalyses adenosine(37) in tRNA + 2 reduced [2Fe-2S]-[ferredoxin] + 2 S-adenosyl-L-methionine = 2-methyladenosine(37) in tRNA + 5'-deoxyadenosine + L-methionine + 2 oxidized [2Fe-2S]-[ferredoxin] + S-adenosyl-L-homocysteine. Functionally, specifically methylates position 2 of adenine 2503 in 23S rRNA and position 2 of adenine 37 in tRNAs. This is Probable dual-specificity RNA methyltransferase RlmN from Lachnoclostridium phytofermentans (strain ATCC 700394 / DSM 18823 / ISDg) (Clostridium phytofermentans).